A 380-amino-acid chain; its full sequence is MNNTLKYWKEAATLIVAARTSHGHFPYIQPQVQFPNQQNNTSDYEVLLLKRSQKSGFMPNAFVFPGGNIESSDFSSDWIKVFSRYEQKPNFGLGLVKQLDNRSPMFTADSSKFGSLIPGEVATRICAIRETFEESGILLVVPENFNSEDNQHLVEVTDQDKEKLSKWREEVQRNPSQFIQMCKEMRCMPNIWALKEWSNWLTPVISQGVKSRRFDTAFFICCLNAKPAVSDDNKEVTSFKWWTPTEALEDYKSHKIWIPPPQFYELSRLCHFAPINELHKFIVNRSLEGCERWMPVIAQCEDGIVHTLPGDDLYPEDPDLTGEKQTVVCSNETIENLIQKGGRFHRLVLIDGKPTLLVNIKPKYKHINPLTIESESKNKL.

Residues 8–264 (WKEAATLIVA…KIWIPPPQFY (257 aa)) form the Nudix hydrolase domain. The Nudix box motif lies at 115 to 136 (SLIPGEVATRICAIRETFEESG). Glu-130 and Glu-134 together coordinate Mg(2+). The Microbody targeting signal motif lies at 378-380 (NKL).

It belongs to the Nudix hydrolase family. In terms of assembly, monomer. The cofactor is Mg(2+). It depends on Mn(2+) as a cofactor.

The protein resides in the peroxisome. The enzyme catalyses an acyl-CoA + H2O = an acyl-4'-phosphopantetheine + adenosine 3',5'-bisphosphate + 2 H(+). The catalysed reaction is CoA + H2O = (R)-4'-phosphopantetheine + adenosine 3',5'-bisphosphate + 2 H(+). It carries out the reaction hexanoyl-CoA + H2O = hexanoyl-4'-phosphopantetheine + adenosine 3',5'-bisphosphate + 2 H(+). It catalyses the reaction octanoyl-CoA + H2O = S-octanoyl-4'-phosphopantetheine + adenosine 3',5'-bisphosphate + 2 H(+). The enzyme catalyses butanoyl-CoA + H2O = S-butanoyl-4'-phosphopantetheine + adenosine 3',5'-bisphosphate + 2 H(+). The catalysed reaction is propanoyl-CoA + H2O = propanoyl-4'-phosphopantetheine + adenosine 3',5'-bisphosphate + 2 H(+). It carries out the reaction malonyl-CoA + H2O = malonyl-4'-phosphopantetheine + adenosine 3',5'-bisphosphate + 2 H(+). It catalyses the reaction succinyl-CoA + H2O = succinyl-4'-phosphopantetheine + adenosine 3',5'-bisphosphate + 2 H(+). The enzyme catalyses choloyl-CoA + H2O = S-choloyl-4'-phosphopantetheine + adenosine 3',5'-bisphosphate + 2 H(+). The catalysed reaction is 4,8-dimethylnonanoyl-CoA + H2O = S-(4,8-dimethylnonanoyl)-4'-phosphopantetheine + adenosine 3',5'-bisphosphate + 2 H(+). It carries out the reaction (9Z,12Z,15Z)-octadecatrienoyl-CoA + H2O = S-(9Z,12Z,15Z-octadecatrienoyl)-4'-phosphopantetheine + adenosine 3',5'-bisphosphate + 2 H(+). It catalyses the reaction (9Z,12Z)-octadecadienoyl-CoA + H2O = S-(9Z,12Z-octadecadienoyl)-4'-phosphopantetheine + adenosine 3',5'-bisphosphate + 2 H(+). The enzyme catalyses (9Z)-hexadecenoyl-CoA + H2O = S-(9Z-hexadecenoyl)-4'-phosphopantetheine + adenosine 3',5'-bisphosphate + 2 H(+). The catalysed reaction is (9Z)-tetradecenoyl-CoA + H2O = S-(9Z-tetradecenoyl)-4'-phosphopantetheine + adenosine 3',5'-bisphosphate + 2 H(+). It carries out the reaction (6Z)-octenoyl-CoA + H2O = S-(6Z-octenoyl)-4'-phosphopantetheine + adenosine 3',5'-bisphosphate + 2 H(+). It catalyses the reaction hexadecanoyl-CoA + H2O = S-hexadecanoyl-4'-phosphopantetheine + adenosine 3',5'-bisphosphate + 2 H(+). The enzyme catalyses tetradecanoyl-CoA + H2O = tetradecanoyl-4'-phosphopantetheine + adenosine 3',5'-bisphosphate + 2 H(+). The catalysed reaction is dodecanoyl-CoA + H2O = S-dodecanoyl-4'-phosphopantetheine + adenosine 3',5'-bisphosphate + 2 H(+). It carries out the reaction a 5'-end CoA-ribonucleoside in mRNA + H2O = a 5'-end phospho-adenosine-phospho-ribonucleoside in mRNA + (R)-4'-phosphopantetheine + 2 H(+). Its function is as follows. Fatty acyl-coenzyme A (CoA) diphosphatase that hydrolyzes fatty acyl-CoA to yield acyl-4'-phosphopantetheine and adenosine 3',5'-bisphosphate. Mediates the hydrolysis of a wide range of CoA esters, including choloyl-CoA and branched-chain fatty-acyl-CoA esters and at low substrate concentrations medium and long-chain fatty-acyl-CoA esters are the primary substrates. Highest activity seen with medium-chain acyl-CoA esters and higher rates of activity seen with the unsaturated acyl-CoA esters compared with the saturated esters. Exhibits decapping activity towards dpCoA-capped RNAs in vitro. This is Acyl-coenzyme A diphosphatase NUDT19 (nudt19) from Xenopus laevis (African clawed frog).